Consider the following 430-residue polypeptide: Probable dual-specificity RNA methyltransferase RlmN (430 aa).

The active-site Proton acceptor is glutamate 125. The region spanning arginine 152–glutamate 395 is the Radical SAM core domain. Cysteine 159 and cysteine 400 are oxidised to a cystine. [4Fe-4S] cluster contacts are provided by cysteine 166, cysteine 170, and cysteine 173. S-adenosyl-L-methionine contacts are provided by residues glycine 221–glutamate 222, serine 255, serine 278–histidine 280, and asparagine 357. Cysteine 400 functions as the S-methylcysteine intermediate in the catalytic mechanism.

Belongs to the radical SAM superfamily. RlmN family. [4Fe-4S] cluster is required as a cofactor.

It localises to the cytoplasm. It catalyses the reaction adenosine(2503) in 23S rRNA + 2 reduced [2Fe-2S]-[ferredoxin] + 2 S-adenosyl-L-methionine = 2-methyladenosine(2503) in 23S rRNA + 5'-deoxyadenosine + L-methionine + 2 oxidized [2Fe-2S]-[ferredoxin] + S-adenosyl-L-homocysteine. The enzyme catalyses adenosine(37) in tRNA + 2 reduced [2Fe-2S]-[ferredoxin] + 2 S-adenosyl-L-methionine = 2-methyladenosine(37) in tRNA + 5'-deoxyadenosine + L-methionine + 2 oxidized [2Fe-2S]-[ferredoxin] + S-adenosyl-L-homocysteine. Functionally, specifically methylates position 2 of adenine 2503 in 23S rRNA and position 2 of adenine 37 in tRNAs. This chain is Probable dual-specificity RNA methyltransferase RlmN, found in Acidothermus cellulolyticus (strain ATCC 43068 / DSM 8971 / 11B).